The following is a 341-amino-acid chain: Tubulin beta chain (341 aa).

Residues serine 64, glycine 68, threonine 69, glycine 70, asparagine 130, and asparagine 152 each contribute to the GTP site.

This sequence belongs to the tubulin family. Dimer of alpha and beta chains. A typical microtubule is a hollow water-filled tube with an outer diameter of 25 nm and an inner diameter of 15 nM. Alpha-beta heterodimers associate head-to-tail to form protofilaments running lengthwise along the microtubule wall with the beta-tubulin subunit facing the microtubule plus end conferring a structural polarity. Microtubules usually have 13 protofilaments but different protofilament numbers can be found in some organisms and specialized cells. Requires Mg(2+) as cofactor.

The protein resides in the cytoplasm. It localises to the cytoskeleton. Tubulin is the major constituent of microtubules, a cylinder consisting of laterally associated linear protofilaments composed of alpha- and beta-tubulin heterodimers. Microtubules grow by the addition of GTP-tubulin dimers to the microtubule end, where a stabilizing cap forms. Below the cap, tubulin dimers are in GDP-bound state, owing to GTPase activity of alpha-tubulin. In Haliotis discus (Abalone), this protein is Tubulin beta chain.